The primary structure comprises 43 residues: Protein PsbN (43 aa).

Residues 5–27 (TLFAISISCLLVSFTGYALYTAF) form a helical membrane-spanning segment.

The protein belongs to the PsbN family.

It is found in the plastid. Its subcellular location is the chloroplast thylakoid membrane. Its function is as follows. May play a role in photosystem I and II biogenesis. The sequence is that of Protein PsbN from Thuja plicata (Western red-cedar).